We begin with the raw amino-acid sequence, 711 residues long: Polyribonucleotide nucleotidyltransferase (711 aa).

Mg(2+) contacts are provided by Asp486 and Asp492. A KH domain is found at 553-612; that stretch reads PRIHTIKISPDKIKDVIGKGGSVIRALTEETGTTIEIEDDGTVKIAATDGEKAKFAIRRI. An S1 motif domain is found at 622 to 690; it reads GRIYNGKVTR…RQGRVRLSIK (69 aa). The tract at residues 690–711 is disordered; that stretch reads KEATEQTQPAAAPEAPAAEQGE. Positions 694 to 711 are enriched in low complexity; it reads EQTQPAAAPEAPAAEQGE.

The protein belongs to the polyribonucleotide nucleotidyltransferase family. In terms of assembly, component of the RNA degradosome, which is a multiprotein complex involved in RNA processing and mRNA degradation. Mg(2+) is required as a cofactor.

It localises to the cytoplasm. The catalysed reaction is RNA(n+1) + phosphate = RNA(n) + a ribonucleoside 5'-diphosphate. Involved in mRNA degradation. Catalyzes the phosphorolysis of single-stranded polyribonucleotides processively in the 3'- to 5'-direction. This Enterobacter sp. (strain 638) protein is Polyribonucleotide nucleotidyltransferase.